Consider the following 289-residue polypeptide: Alpha-soluble NSF attachment protein (289 aa).

A TPR repeat occupies 112–145 (GKYYKEIAELYELEQNFEQAIIYFEKAADIYQSE).

It belongs to the SNAP family.

The protein localises to the membrane. Its function is as follows. Required for vesicular transport between the endoplasmic reticulum and the Golgi apparatus. The polypeptide is Alpha-soluble NSF attachment protein (Vitis vinifera (Grape)).